Consider the following 934-residue polypeptide: Protocadherin gamma-C3 (934 aa).

A signal peptide spans 1–31 (MVPEAWRSGLVSTGRVVGVLLLLGALNKAST). Cadherin domains follow at residues 32–135 (VIHY…NPAF), 136–244 (PTQE…APVF), 245–352 (NQSL…APEI), 353–457 (TVTS…PPQS), 458–567 (SQSS…APQV), and 572–685 (PGGS…APRE). Over 32-693 (VIHYEIPEER…REQNKNLTFY (662 aa)) the chain is Extracellular. 6 N-linked (GlcNAc...) asparagine glycosylation sites follow: asparagine 245, asparagine 424, asparagine 478, asparagine 550, asparagine 615, and asparagine 689. Residues 694–714 (LLLSLILVSVGFVVTVFGVII) traverse the membrane as a helical segment. Residues 715 to 934 (FKVYKWKQSR…KKKSGKKEKK (220 aa)) lie on the Cytoplasmic side of the membrane. 2 disordered regions span residues 804–843 (ESAP…WPNN) and 904–934 (ATLT…KEKK). Polar residues predominate over residues 812–843 (APPNTDWRFSQAQRPGTSGSQNGDDTGTWPNN). Over residues 924-934 (NKKKSGKKEKK) the composition is skewed to basic residues.

The protein resides in the cell membrane. Functionally, potential calcium-dependent cell-adhesion protein. May be involved in the establishment and maintenance of specific neuronal connections in the brain. This chain is Protocadherin gamma-C3 (PCDHGC3), found in Pan troglodytes (Chimpanzee).